We begin with the raw amino-acid sequence, 445 residues long: MKPVIALVGRPNVGKSTLFNRLTRSRDALVADLPGLTRDRHYGEGRVGARPYLVVDTGGFEPVAKDGILHEMARQTRQAVEEADVVVFIVDGRNGLAPQDKSIADYLRKTGRPIFLVVNKAEGMKYTAVASDFYELGLGDPRAISAAHGDGVNDMINEALEVAYAGEPQESEEAAAARGIKIAIVGRPNVGKSTLVNTLIGEDRVIAFDMPGTTRDSIYVDFERNGKHYTLIDTAGLRRRGKVFEAIEKFSVVKTLQSISDANVVILLLDARQDISDQDAHIAGFVVEQGRALVVGVNKWDGLDPHVRERTKADLARKLKFLEFAKFHFISAAEKTGIGALMRSVDDAYAAAMKKLPTPKLTRALIEAVEFQQPRRRGPVRPKLRYAHQGGQNPPIIVIHGNALDAVTETYKRYLENRFRETFSLTGTPLRIEFRSSTNPYADKD.

2 EngA-type G domains span residues 3–167 (PVIA…YAGE) and 180–353 (IKIA…AAAM). GTP contacts are provided by residues 9–16 (GRPNVGKS), 56–60 (DTGGF), 119–122 (NKAE), 186–193 (GRPNVGKS), 233–237 (DTAGL), and 298–301 (NKWD). The KH-like domain maps to 354 to 438 (KKLPTPKLTR…PLRIEFRSST (85 aa)).

It belongs to the TRAFAC class TrmE-Era-EngA-EngB-Septin-like GTPase superfamily. EngA (Der) GTPase family. In terms of assembly, associates with the 50S ribosomal subunit.

In terms of biological role, GTPase that plays an essential role in the late steps of ribosome biogenesis. The protein is GTPase Der of Burkholderia pseudomallei (strain 1106a).